Reading from the N-terminus, the 103-residue chain is Cell division protein FtsB (103 aa).

Over 1–3 the chain is Cytoplasmic; that stretch reads MGK. Residues 4–21 traverse the membrane as a helical segment; sequence LTLLLLAILVWLQYSLWF. The Periplasmic portion of the chain corresponds to 22–103; it reads GKNGIHDYSR…RAQTAGQNNR (82 aa). Positions 31 to 71 form a coiled coil; that stretch reads RVNDDVAAQQATNAKLKARNDQLFAEIDDLNGGQEALEERA.

The protein belongs to the FtsB family. Part of a complex composed of FtsB, FtsL and FtsQ.

It is found in the cell inner membrane. Its function is as follows. Essential cell division protein. May link together the upstream cell division proteins, which are predominantly cytoplasmic, with the downstream cell division proteins, which are predominantly periplasmic. The sequence is that of Cell division protein FtsB from Escherichia fergusonii (strain ATCC 35469 / DSM 13698 / CCUG 18766 / IAM 14443 / JCM 21226 / LMG 7866 / NBRC 102419 / NCTC 12128 / CDC 0568-73).